Here is a 187-residue protein sequence, read N- to C-terminus: UPF0340 protein SPN23F05980 (187 aa).

This sequence belongs to the UPF0340 family.

The chain is UPF0340 protein SPN23F05980 from Streptococcus pneumoniae (strain ATCC 700669 / Spain 23F-1).